Here is a 400-residue protein sequence, read N- to C-terminus: Enoyl-[acyl-carrier-protein] reductase [NADH] (400 aa).

NAD(+) contacts are provided by residues Gly48 to Tyr53, Phe74 to Glu75, Asp111 to Ala112, and Leu139 to Ala140. Tyr225 serves as a coordination point for substrate. Residue Tyr235 is the Proton donor of the active site. NAD(+) contacts are provided by residues Lys244 and Val273–Thr275.

This sequence belongs to the TER reductase family. In terms of assembly, monomer.

It catalyses the reaction a 2,3-saturated acyl-[ACP] + NAD(+) = a (2E)-enoyl-[ACP] + NADH + H(+). It functions in the pathway lipid metabolism; fatty acid biosynthesis. Functionally, involved in the final reduction of the elongation cycle of fatty acid synthesis (FAS II). Catalyzes the reduction of a carbon-carbon double bond in an enoyl moiety that is covalently linked to an acyl carrier protein (ACP). This chain is Enoyl-[acyl-carrier-protein] reductase [NADH], found in Shewanella baltica (strain OS223).